Reading from the N-terminus, the 261-residue chain is MARGLKKHLKRLNAPKHWMLDKLGGAFAPKPSSGPHKSRECLPLILILRNRLKYALTYREVVSILMQRHILVDGKIHFCIRLSDVVSIPKTNENFRLLYDTKGRFRLHSIRDEESKFKLCKVRSVQFGQKGIPYINTYDGRTIRYPDPLIKANDTIKLDLETNKITDFIKFDVGNVVMVTGGRNRGRVGVIKNREKHKGSFETIHVQDATGHEFATRLGNVFTIGKGTKPWVSLPKGKGIKLTILEEAKKRQAAAQTAATA.

Positions 42–100 constitute an S4 RNA-binding domain; sequence LPLILILRNRLKYALTYREVVSILMQRHILVDGKIHFCIRLSDVVSIPKTNENFRLLYD.

The protein belongs to the eukaryotic ribosomal protein eS4 family.

It is found in the cytoplasm. The protein is Small ribosomal subunit protein eS4 (RPS4) of Prunus armeniaca (Apricot).